Consider the following 227-residue polypeptide: tRNA (guanine-N(1)-)-methyltransferase (227 aa).

S-adenosyl-L-methionine-binding positions include G110 and 129 to 134; that span reads IGDYVL.

It belongs to the RNA methyltransferase TrmD family. As to quaternary structure, homodimer.

The protein localises to the cytoplasm. The enzyme catalyses guanosine(37) in tRNA + S-adenosyl-L-methionine = N(1)-methylguanosine(37) in tRNA + S-adenosyl-L-homocysteine + H(+). In terms of biological role, specifically methylates guanosine-37 in various tRNAs. The polypeptide is tRNA (guanine-N(1)-)-methyltransferase (Mycoplasmopsis agalactiae (strain NCTC 10123 / CIP 59.7 / PG2) (Mycoplasma agalactiae)).